The sequence spans 259 residues: Deoxyribose-phosphate aldolase (259 aa).

The active-site Proton donor/acceptor is the Asp-102. Residue Lys-167 is the Schiff-base intermediate with acetaldehyde of the active site. The active-site Proton donor/acceptor is Lys-201.

The protein belongs to the DeoC/FbaB aldolase family. DeoC type 2 subfamily.

It localises to the cytoplasm. The catalysed reaction is 2-deoxy-D-ribose 5-phosphate = D-glyceraldehyde 3-phosphate + acetaldehyde. Its pathway is carbohydrate degradation; 2-deoxy-D-ribose 1-phosphate degradation; D-glyceraldehyde 3-phosphate and acetaldehyde from 2-deoxy-alpha-D-ribose 1-phosphate: step 2/2. In terms of biological role, catalyzes a reversible aldol reaction between acetaldehyde and D-glyceraldehyde 3-phosphate to generate 2-deoxy-D-ribose 5-phosphate. This chain is Deoxyribose-phosphate aldolase, found in Shigella flexneri.